Consider the following 247-residue polypeptide: tRNA (guanine-N(7)-)-methyltransferase (247 aa).

Residues glycine 70, glutamate 93–isoleucine 94, asparagine 128–alanine 129, and leucine 148 each bind S-adenosyl-L-methionine. Residue aspartate 151 is part of the active site. S-adenosyl-L-methionine is bound at residue serine 226–glutamate 228.

This sequence belongs to the class I-like SAM-binding methyltransferase superfamily. TrmB family.

The protein resides in the nucleus. It carries out the reaction guanosine(46) in tRNA + S-adenosyl-L-methionine = N(7)-methylguanosine(46) in tRNA + S-adenosyl-L-homocysteine. Its pathway is tRNA modification; N(7)-methylguanine-tRNA biosynthesis. In terms of biological role, catalyzes the formation of N(7)-methylguanine at position 46 (m7G46) in tRNA. In Drosophila persimilis (Fruit fly), this protein is tRNA (guanine-N(7)-)-methyltransferase.